A 115-amino-acid chain; its full sequence is Large ribosomal subunit protein bL19 (115 aa).

Belongs to the bacterial ribosomal protein bL19 family.

Its function is as follows. This protein is located at the 30S-50S ribosomal subunit interface and may play a role in the structure and function of the aminoacyl-tRNA binding site. This Parabacteroides distasonis (strain ATCC 8503 / DSM 20701 / CIP 104284 / JCM 5825 / NCTC 11152) protein is Large ribosomal subunit protein bL19.